The chain runs to 232 residues: Small ribosomal subunit protein uS3 (232 aa).

In terms of domain architecture, KH type-2 spans 39 to 107 (VRQFLIKELA…PAQINIAEVR (69 aa)).

It belongs to the universal ribosomal protein uS3 family. Part of the 30S ribosomal subunit. Forms a tight complex with proteins S10 and S14.

Its function is as follows. Binds the lower part of the 30S subunit head. Binds mRNA in the 70S ribosome, positioning it for translation. The protein is Small ribosomal subunit protein uS3 of Serratia proteamaculans (strain 568).